We begin with the raw amino-acid sequence, 101 residues long: UPF0473 protein str1961 (101 aa).

It belongs to the UPF0473 family.

This chain is UPF0473 protein str1961, found in Streptococcus thermophilus (strain CNRZ 1066).